We begin with the raw amino-acid sequence, 629 residues long: tRNA uridine 5-carboxymethylaminomethyl modification enzyme MnmG (629 aa).

FAD is bound by residues 13 to 18 (GGGHAG), Val125, and Ser180. 273-287 (GPRYCPSIEDKIHRF) provides a ligand contact to NAD(+). Gln370 contacts FAD.

This sequence belongs to the MnmG family. As to quaternary structure, homodimer. Heterotetramer of two MnmE and two MnmG subunits. The cofactor is FAD.

The protein localises to the cytoplasm. In terms of biological role, NAD-binding protein involved in the addition of a carboxymethylaminomethyl (cmnm) group at the wobble position (U34) of certain tRNAs, forming tRNA-cmnm(5)s(2)U34. This Shewanella sp. (strain MR-7) protein is tRNA uridine 5-carboxymethylaminomethyl modification enzyme MnmG.